Reading from the N-terminus, the 222-residue chain is Glutathione S-transferase A6 (222 aa).

The GST N-terminal domain occupies glutamate 3–glycine 83. Residues tyrosine 9, arginine 45, glutamine 54–valine 55, and glutamine 67–threonine 68 contribute to the glutathione site. In terms of domain architecture, GST C-terminal spans aspartate 85–valine 208.

The protein belongs to the GST superfamily. Alpha family. In terms of assembly, homodimer or heterodimer of GSTA1 and GSTA2.

The protein localises to the cytoplasm. The enzyme catalyses RX + glutathione = an S-substituted glutathione + a halide anion + H(+). Its function is as follows. Conjugation of reduced glutathione to a wide number of exogenous and endogenous hydrophobic electrophiles. The chain is Glutathione S-transferase A6 (Gsta6) from Rattus norvegicus (Rat).